A 167-amino-acid chain; its full sequence is S-ribosylhomocysteine lyase (167 aa).

3 residues coordinate Fe cation: His-54, His-58, and Cys-128.

This sequence belongs to the LuxS family. Homodimer. Fe cation is required as a cofactor.

It catalyses the reaction S-(5-deoxy-D-ribos-5-yl)-L-homocysteine = (S)-4,5-dihydroxypentane-2,3-dione + L-homocysteine. Functionally, involved in the synthesis of autoinducer 2 (AI-2) which is secreted by bacteria and is used to communicate both the cell density and the metabolic potential of the environment. The regulation of gene expression in response to changes in cell density is called quorum sensing. Catalyzes the transformation of S-ribosylhomocysteine (RHC) to homocysteine (HC) and 4,5-dihydroxy-2,3-pentadione (DPD). The polypeptide is S-ribosylhomocysteine lyase (Haemophilus influenzae (strain PittEE)).